The following is a 525-amino-acid chain: GMP synthase [glutamine-hydrolyzing] (525 aa).

A Glutamine amidotransferase type-1 domain is found at 9 to 207 (RILILDFGSQ…VRDICQCEAL (199 aa)). Cys86 acts as the Nucleophile in catalysis. Active-site residues include His181 and Glu183. The region spanning 208–400 (WTPAKIIDDA…LGLPYDMLYR (193 aa)) is the GMPS ATP-PPase domain. 235–241 (SGGVDSS) contacts ATP.

In terms of assembly, homodimer.

It carries out the reaction XMP + L-glutamine + ATP + H2O = GMP + L-glutamate + AMP + diphosphate + 2 H(+). Its pathway is purine metabolism; GMP biosynthesis; GMP from XMP (L-Gln route): step 1/1. In terms of biological role, catalyzes the synthesis of GMP from XMP. The protein is GMP synthase [glutamine-hydrolyzing] of Salmonella arizonae (strain ATCC BAA-731 / CDC346-86 / RSK2980).